A 308-amino-acid polypeptide reads, in one-letter code: Ribosomal RNA large subunit methyltransferase F (308 aa).

It belongs to the methyltransferase superfamily. METTL16/RlmF family.

The protein resides in the cytoplasm. The catalysed reaction is adenosine(1618) in 23S rRNA + S-adenosyl-L-methionine = N(6)-methyladenosine(1618) in 23S rRNA + S-adenosyl-L-homocysteine + H(+). In terms of biological role, specifically methylates the adenine in position 1618 of 23S rRNA. This Salmonella schwarzengrund (strain CVM19633) protein is Ribosomal RNA large subunit methyltransferase F.